Reading from the N-terminus, the 340-residue chain is tRNA N6-adenosine threonylcarbamoyltransferase (340 aa).

Residues His111 and His115 each coordinate Fe cation. Residues 134–138 (IISGA), Asp167, Gly180, and Asn273 contribute to the substrate site. Asp301 is a binding site for Fe cation.

Belongs to the KAE1 / TsaD family. Fe(2+) is required as a cofactor.

The protein resides in the cytoplasm. It catalyses the reaction L-threonylcarbamoyladenylate + adenosine(37) in tRNA = N(6)-L-threonylcarbamoyladenosine(37) in tRNA + AMP + H(+). In terms of biological role, required for the formation of a threonylcarbamoyl group on adenosine at position 37 (t(6)A37) in tRNAs that read codons beginning with adenine. Is involved in the transfer of the threonylcarbamoyl moiety of threonylcarbamoyl-AMP (TC-AMP) to the N6 group of A37, together with TsaE and TsaB. TsaD likely plays a direct catalytic role in this reaction. This Wigglesworthia glossinidia brevipalpis protein is tRNA N6-adenosine threonylcarbamoyltransferase.